The following is a 215-amino-acid chain: tRNA (guanine-N(7)-)-methyltransferase (215 aa).

S-adenosyl-L-methionine-binding residues include E44, E69, D96, and D118. D118 is an active-site residue. K122 contacts substrate. The tract at residues 124-129 is interaction with RNA; it reads RHEKRR. Residues D154 and 192-195 contribute to the substrate site; that span reads TEYE.

The protein belongs to the class I-like SAM-binding methyltransferase superfamily. TrmB family.

It catalyses the reaction guanosine(46) in tRNA + S-adenosyl-L-methionine = N(7)-methylguanosine(46) in tRNA + S-adenosyl-L-homocysteine. Its pathway is tRNA modification; N(7)-methylguanine-tRNA biosynthesis. Its function is as follows. Catalyzes the formation of N(7)-methylguanine at position 46 (m7G46) in tRNA. The sequence is that of tRNA (guanine-N(7)-)-methyltransferase from Limosilactobacillus fermentum (strain NBRC 3956 / LMG 18251) (Lactobacillus fermentum).